Here is a 3584-residue protein sequence, read N- to C-terminus: D-lysergyl-peptide-synthetase subunit 1 (3584 aa).

The segment at 25–44 (IESINGDKNKSERHTASSSA) is disordered. The segment covering 29–39 (NGDKNKSERHT) has biased composition (basic and acidic residues). Residues 307 to 706 (SCCSRPNSQA…LGRKDDQVKI (400 aa)) are adenylation (A) domain 1. The Carrier 1 domain maps to 848–917 (REKLLQALFA…TLREIVIVST (70 aa)). Ser880 carries the post-translational modification O-(pantetheine 4'-phosphoryl)serine. Positions 962–1353 (EDIYPCTHLQ…EHILTQIHSN (392 aa)) are condensation (C) domain 1. An adenylation (A) domain 2 region spans residues 1396-1803 (QAKCQAQPDA…RRKDAQVKIR (408 aa)). A Carrier 2 domain is found at 1948-2016 (TEHEISAIWA…TIRKLALARG (69 aa)). At Ser1980 the chain carries O-(pantetheine 4'-phosphoryl)serine. A condensation (C) domain 2 region spans residues 2066 to 2483 (ERIYPCSPIQ…ALPVLDEDQM (418 aa)). The adenylation (A) domain 3 stretch occupies residues 2508-2906 (QCIRCPDSPS…GRNDDQVKVR (399 aa)). The Carrier 3 domain maps to 3041–3109 (MEAELQQLVG…RLSDLARIVE (69 aa)). Ser3073 carries the O-(pantetheine 4'-phosphoryl)serine modification. A cyclization (Cyc) domain region spans residues 3174–3472 (LYFSKPMASE…VAKSTTWSSD (299 aa)).

This sequence belongs to the NRP synthetase family.

Its pathway is alkaloid biosynthesis; ergot alkaloid biosynthesis. D-lysergyl-peptide-synthetase subunit 1; part of the gene cluster that mediates the biosynthesis of fungal ergot alkaloid. DmaW catalyzes the first step of ergot alkaloid biosynthesis by condensing dimethylallyl diphosphate (DMAP) and tryptophan to form 4-dimethylallyl-L-tryptophan. The second step is catalyzed by the methyltransferase easF that methylates 4-dimethylallyl-L-tryptophan in the presence of S-adenosyl-L-methionine, resulting in the formation of 4-dimethylallyl-L-abrine. The catalase easC and the FAD-dependent oxidoreductase easE then transform 4-dimethylallyl-L-abrine to chanoclavine-I which is further oxidized by easD in the presence of NAD(+), resulting in the formation of chanoclavine-I aldehyde. Agroclavine dehydrogenase easG then mediates the conversion of chanoclavine-I aldehyde to agroclavine via a non-enzymatic adduct reaction: the substrate is an iminium intermediate that is formed spontaneously from chanoclavine-I aldehyde in the presence of glutathione. The presence of easA is not required to complete this reaction. Further conversion of agroclavine to paspalic acid is a two-step process involving oxidation of agroclavine to elymoclavine and of elymoclavine to paspalic acid, the second step being performed by the elymoclavine oxidase cloA. Paspalic acid is then further converted to D-lysergic acid. Ergopeptines are assembled from D-lysergic acid and three different amino acids by the D-lysergyl-peptide-synthetases composed each of a monomudular and a trimodular nonribosomal peptide synthetase subunit. LpsB and lpsC encode the monomodular subunits responsible for D-lysergic acid activation and incorporation into the ergopeptine backbone. LpsA1 and A2 subunits encode the trimodular nonribosomal peptide synthetase assembling the tripeptide portion of ergopeptines. LpsA1 is responsible for formation of the major ergopeptine, ergotamine, and lpsA2 for alpha-ergocryptine, the minor ergopeptine of the total alkaloid mixture elaborated by C.purpurea. D-lysergyl-tripeptides are assembled by the nonribosomal peptide synthetases and released as N-(D-lysergyl-aminoacyl)-lactams. Cyclolization of the D-lysergyl-tripeptides is performed by the Fe(2+)/2-ketoglutarate-dependent dioxygenase easH which introduces a hydroxyl group into N-(D-lysergyl-aminoacyl)-lactam at alpha-C of the aminoacyl residue followed by spontaneous condensation with the terminal lactam carbonyl group. The protein is D-lysergyl-peptide-synthetase subunit 1 of Claviceps purpurea (strain 20.1) (Ergot fungus).